A 101-amino-acid polypeptide reads, in one-letter code: Phosphoribosyl-AMP cyclohydrolase (101 aa).

Position 71 (Asp71) interacts with Mg(2+). Cys72 contacts Zn(2+). 2 residues coordinate Mg(2+): Asp73 and Asp75. Zn(2+) contacts are provided by Cys88 and Cys95.

Belongs to the PRA-CH family. In terms of assembly, homodimer. The cofactor is Mg(2+). Zn(2+) is required as a cofactor.

Its subcellular location is the cytoplasm. The catalysed reaction is 1-(5-phospho-beta-D-ribosyl)-5'-AMP + H2O = 1-(5-phospho-beta-D-ribosyl)-5-[(5-phospho-beta-D-ribosylamino)methylideneamino]imidazole-4-carboxamide. It functions in the pathway amino-acid biosynthesis; L-histidine biosynthesis; L-histidine from 5-phospho-alpha-D-ribose 1-diphosphate: step 3/9. Its function is as follows. Catalyzes the hydrolysis of the adenine ring of phosphoribosyl-AMP. The protein is Phosphoribosyl-AMP cyclohydrolase of Bacillus cereus (strain ATCC 14579 / DSM 31 / CCUG 7414 / JCM 2152 / NBRC 15305 / NCIMB 9373 / NCTC 2599 / NRRL B-3711).